A 229-amino-acid chain; its full sequence is Prolactin (229 aa).

An N-terminal signal peptide occupies residues 1–30; it reads MDNKGWSLKGSLLFLLLLLSDLLLCKSVAS. A disulfide bond links Cys34 and Cys41. Phosphoserine is present on Ser56. Residue Asn61 is glycosylated (N-linked (GlcNAc...) asparagine). 2 positions are modified to phosphoserine: Ser64 and Ser120. Cystine bridges form between Cys88–Cys204 and Cys221–Cys229.

Belongs to the somatotropin/prolactin family. As to quaternary structure, interacts with PRLR.

It localises to the secreted. In terms of biological role, prolactin acts primarily on the mammary gland by promoting lactation. The chain is Prolactin (PRL) from Felis catus (Cat).